A 406-amino-acid chain; its full sequence is Sorting nexin-6 (406 aa).

Met-1 carries the N-acetylmethionine modification. N-acetylmethionine; in Sorting nexin-6, N-terminally processed is present on Met-2. The interaction with PIM1 stretch occupies residues 2-179 (MEGLDDGPDF…NQDLSVRGKN (178 aa)). The PX domain occupies 26–173 (LQSDAALQVD…HVFLEYNQDL (148 aa)). Residues 41 to 47 (SERDRVK), 100 to 106 (FDASREK), and 114 to 117 (EGSM) each bind a 1,2-diacyl-sn-glycero-3-phospho-(1D-myo-inositol-4,5-bisphosphate). Residues Ser-116 and Ser-194 each carry the phosphoserine modification. A membrane-binding amphipathic helix region spans residues 182 to 199 (EKLEDFFKNMVKSADGVI). The 204-residue stretch at 203–406 (VKDVDDFFEH…NCLAVLNGDT (204 aa)) folds into the BAR domain.

The protein belongs to the sorting nexin family. As to quaternary structure, forms heterodimers with BAR domain-containing sorting nexins SNX1 and SNX2. The heterodimers are proposed to self-assemble into helical arrays on the membrane to stabilize and expand local membrane curvature underlying endosomal tubule formation. Thought to be a component of the originally described retromer complex (also called SNX-BAR retromer) which is a pentamer containing the heterotrimeric retromer cargo-selective complex (CSC), also described as vacuolar protein sorting subcomplex (VPS), and a heterodimeric membrane-deforming subcomplex formed between SNX1 or SNX2 and SNX5 or SNX6 (also called SNX-BAR subcomplex); the respective CSC and SNX-BAR subcomplexes associate with low affinity. Interacts with SNX1, SNX2, VPS26A, VPS29, VPS35, TGFB receptors, BACE1, BRMS1, PIP5K1C. Interacts with DCTN1; the association with DCTN1 is involved in movement of retromer-c ontaining vesicles toward the TGN. Interacts with PIM1; translocating SNX6 to the nucleus. Interacts with CDKN1B and GIT1. In terms of processing, in vitro phosphorylated by PIM1; not affecting PIM1-dependent nuclear translocation.

It is found in the early endosome membrane. The protein localises to the cytoplasmic vesicle. Its subcellular location is the cytoplasm. The protein resides in the nucleus. Involved in several stages of intracellular trafficking. Interacts with membranes phosphatidylinositol 3,4-bisphosphate and/or phosphatidylinositol 4,5-bisphosphate. Acts in part as component of the retromer membrane-deforming SNX-BAR subcomplex. The SNX-BAR retromer mediates retrograde transport of cargo proteins from endosomes to the trans-Golgi network (TGN) and is involved in endosome-to-plasma membrane transport for cargo protein recycling. The SNX-BAR subcomplex functions to deform the donor membrane into a tubular profile called endosome-to-TGN transport carrier (ETC). Does not have in vitro vesicle-to-membrane remodeling activity. Involved in retrograde endosome-to-TGN transport of lysosomal enzyme receptor IGF2R. May function as link between transport vesicles and dynactin. Negatively regulates retrograde transport of BACE1 from the cell surface to the trans-Golgi network. Involved in E-cadherin sorting and degradation; inhibits PIP5K1C-mediated E-cadherin degradation. In association with GIT1 involved in EGFR degradation. Promotes lysosomal degradation of CDKN1B. May contribute to transcription regulation. The sequence is that of Sorting nexin-6 (Snx6) from Mus musculus (Mouse).